The chain runs to 504 residues: Maturase K (504 aa).

It belongs to the intron maturase 2 family. MatK subfamily.

The protein localises to the plastid. Its subcellular location is the chloroplast. Functionally, usually encoded in the trnK tRNA gene intron. Probably assists in splicing its own and other chloroplast group II introns. The sequence is that of Maturase K from Betula papyrifera (Paper birch).